Consider the following 883-residue polypeptide: Bifunctional heparan sulfate N-deacetylase/N-sulfotransferase 2 (883 aa).

Topologically, residues 1 to 18 (MLQLWKVVRPARQLELHR) are cytoplasmic. Residues 19–39 (LILLLIAFSLGSMGFLAYYVS) form a helical; Signal-anchor for type II membrane protein membrane-spanning segment. Residues 40 to 883 (TSPKAKEPLP…REELQHSSLG (844 aa)) are Lumenal-facing. The heparan sulfate N-deacetylase 2 stretch occupies residues 41 to 597 (SPKAKEPLPL…KRHKDIWSKE (557 aa)). The disordered stretch occupies residues 49 to 81 (PLPLGDCSSGGAAGPGPARPPVPPRPPRPPETA). Over residues 65-78 (PARPPVPPRPPRPP) the composition is skewed to pro residues. N-linked (GlcNAc...) asparagine glycans are attached at residues Asn233, Asn350, and Asn400. The heparan sulfate N-sulfotransferase 2 stretch occupies residues 598 to 883 (KTCDRLPKFL…REELQHSSLG (286 aa)). Lys613 acts as the For sulfotransferase activity in catalysis. 613–617 (KTGTT) serves as a coordination point for 3'-phosphoadenylyl sulfate. Asn666 carries N-linked (GlcNAc...) asparagine glycosylation. Ser711 provides a ligand contact to 3'-phosphoadenylyl sulfate. Residues Asn726 and Asn802 are each glycosylated (N-linked (GlcNAc...) asparagine). Cys817 and Cys827 are disulfide-bonded. Residue 832–836 (KGRRY) participates in 3'-phosphoadenylyl sulfate binding.

This sequence belongs to the sulfotransferase 1 family. NDST subfamily. In terms of assembly, monomer.

It is found in the golgi apparatus membrane. The enzyme catalyses alpha-D-glucosaminyl-[heparan sulfate](n) + 3'-phosphoadenylyl sulfate = N-sulfo-alpha-D-glucosaminyl-[heparan sulfate](n) + adenosine 3',5'-bisphosphate + 2 H(+). It functions in the pathway glycan metabolism; heparan sulfate biosynthesis. Its pathway is glycan metabolism; heparin biosynthesis. Essential bifunctional enzyme that catalyzes both the N-deacetylation and the N-sulfation of glucosamine (GlcNAc) of the glycosaminoglycan in heparan sulfate. Modifies the GlcNAc-GlcA disaccharide repeating sugar backbone to make N-sulfated heparosan, a prerequisite substrate for later modifications in heparin biosynthesis. Plays a role in determining the extent and pattern of sulfation of heparan sulfate. Required for the exosomal release of SDCBP, CD63 and syndecan. The polypeptide is Bifunctional heparan sulfate N-deacetylase/N-sulfotransferase 2 (NDST2) (Homo sapiens (Human)).